Reading from the N-terminus, the 397-residue chain is tRNA(Met) cytidine acetate ligase (397 aa).

ATP is bound by residues 7 to 20 (VTEY…HIYH), G101, N152, and R177.

The protein belongs to the TmcAL family.

It localises to the cytoplasm. The enzyme catalyses cytidine(34) in elongator tRNA(Met) + acetate + ATP = N(4)-acetylcytidine(34) in elongator tRNA(Met) + AMP + diphosphate. In terms of biological role, catalyzes the formation of N(4)-acetylcytidine (ac(4)C) at the wobble position of elongator tRNA(Met), using acetate and ATP as substrates. First activates an acetate ion to form acetyladenylate (Ac-AMP) and then transfers the acetyl group to tRNA to form ac(4)C34. This chain is tRNA(Met) cytidine acetate ligase, found in Leuconostoc citreum (strain KM20).